We begin with the raw amino-acid sequence, 382 residues long: Pyrimidine monooxygenase RutA (382 aa).

FMN is bound by residues 68–69 (IK), Asn-134, Glu-143, 159–160 (RY), and Ser-209.

The protein belongs to the NtaA/SnaA/DszA monooxygenase family. RutA subfamily.

It carries out the reaction uracil + FMNH2 + NADH + O2 = (Z)-3-ureidoacrylate + FMN + NAD(+) + H2O + H(+). The enzyme catalyses thymine + FMNH2 + NADH + O2 = (Z)-2-methylureidoacrylate + FMN + NAD(+) + H2O + H(+). Its function is as follows. Catalyzes the pyrimidine ring opening between N-3 and C-4 by an unusual flavin hydroperoxide-catalyzed mechanism, adding oxygen atoms in the process to yield ureidoacrylate peracid, that immediately reacts with FMN forming ureidoacrylate and FMN-N(5)-oxide. The FMN-N(5)-oxide reacts spontaneously with NADH to produce FMN. Requires the flavin reductase RutF to regenerate FMN in vivo. The chain is Pyrimidine monooxygenase RutA from Shigella flexneri serotype X (strain 2002017).